The primary structure comprises 576 residues: Low-affinity glucose transporter HXT4 (576 aa).

The segment at 1–56 (MSEEAAYQEDTAVQNTPADALSPVESDSNSALSTPSNKAERDDMKDFDENHEESNN) is disordered. Topologically, residues 1 to 66 (MSEEAAYQED…YVEIPKKPAS (66 aa)) are cytoplasmic. Residues 25-37 (ESDSNSALSTPSN) are compositionally biased toward polar residues. Basic and acidic residues predominate over residues 38–54 (KAERDDMKDFDENHEES). A Glycyl lysine isopeptide (Lys-Gly) (interchain with G-Cter in ubiquitin) cross-link involves residue Lys-45. A helical membrane pass occupies residues 67 to 87 (AYVTVSICCLMVAFGGFVFGW). Residues 88–122 (DTGTISGFVAQTDFIRRFGMKHHDGTYYLSKVRTG) lie on the Extracellular side of the membrane. A helical membrane pass occupies residues 123–143 (LIVSIFNIGCAIGGIILAKLG). Topologically, residues 144-149 (DMYGRK) are cytoplasmic. Residues 150–170 (MGLIVVVVIYIIGIIIQIASI) traverse the membrane as a helical segment. The Extracellular segment spans residues 171–180 (NKWYQYFIGR). Residues 181–201 (IISGLGVGGIAVLSPMLISEV) traverse the membrane as a helical segment. At 202–207 (SPKHIR) the chain is on the cytoplasmic side. A helical transmembrane segment spans residues 208–228 (GTLVSCYQLMITLGIFLGYCT). Over 229–242 (NYGTKTYTNSVQWR) the chain is Extracellular. The helical transmembrane segment at 243–263 (VPLGLGFAWALFMIGGMTFVP) threads the bilayer. Over 264–346 (ESPRYLVEVG…IQSLQQLTGD (83 aa)) the chain is Cytoplasmic. The helical transmembrane segment at 347–363 (NYFFYYGTTVFTAVGLE) threads the bilayer. The Extracellular portion of the chain corresponds to 364 to 369 (DSFETS). Residues 370–387 (IVLGIVNFASTFVGIFLV) traverse the membrane as a helical segment. The Cytoplasmic portion of the chain corresponds to 388–394 (ERYGRRR). Residues 395–415 (CLLWGAASMTACMVVFASVGV) form a helical membrane-spanning segment. The Extracellular portion of the chain corresponds to 416–437 (TRLWPNGKKNGSSKGAGNCMIV). Asn-425 carries N-linked (GlcNAc...) asparagine glycosylation. Residues 438 to 458 (FTCFYLFCFATTWAPIPFVVN) traverse the membrane as a helical segment. The Cytoplasmic segment spans residues 459–475 (SETFPLRVKSKCMAIAQ). Residues 476–496 (ACNWIWGFLIGFFTPFISGAI) traverse the membrane as a helical segment. A topological domain (extracellular) is located at residue Asp-497. A helical transmembrane segment spans residues 498-518 (FYYGYVFMGCLVFSYFYVFFF). Over 519-576 (VPETKGLTLEEVNTLWEEGVLPWKSPSWVPPNKRGTDYNADDLMHDDQPFYKKMFGKK) the chain is Cytoplasmic.

Belongs to the major facilitator superfamily. Sugar transporter (TC 2.A.1.1) family.

The protein resides in the cell membrane. Xylose uptake is strongly inhibited by glucose. In terms of biological role, low-affinity glucose transporter. Can also transport xylose. The sequence is that of Low-affinity glucose transporter HXT4 (HXT4) from Saccharomyces cerevisiae (strain ATCC 204508 / S288c) (Baker's yeast).